The chain runs to 48 residues: Protein PsbN (48 aa).

Residues 12–34 (LLIAMVTITFGLTGYGLYTAFGP) traverse the membrane as a helical segment.

The protein belongs to the PsbN family.

It localises to the cellular thylakoid membrane. Functionally, may play a role in photosystem I and II biogenesis. The sequence is that of Protein PsbN from Prochlorococcus marinus (strain MIT 9313).